The following is a 379-amino-acid chain: Transcription termination factor 1a, mitochondrial (379 aa).

A mitochondrion-targeting transit peptide spans 1 to 37; sequence MASRNIWCVRRNFLFDLRDWMLQYSAEVFLKSISFRP. 5 interaction with DNA regions span residues 151–152, 229–233, 306–313, 337–340, and 366–373; these read RS, QSTKR, SEKKFNDK, SINT, and SQRRYEAK.

This sequence belongs to the mTERF family. In terms of assembly, monomer. Post-translationally, phosphoprotein with mostly four phosphate groups. While the DNA-binding activity is unaffected by the phosphorylation state, only the phosphorylated form of the protein is active for termination activity. Functioning seems to be regulated by phosphorylation. Predominantly expressed in heart and liver, with extremely low levels in other tissues. Expressed strongly in the heart and at lower levels in brain, liver and kidney.

Its subcellular location is the mitochondrion. Its function is as follows. Transcription termination factor. Binds to a 28 bp region within the tRNA(Leu(uur)) gene at a position immediately adjacent to and downstream of the 16S rRNA gene; this region comprises a tridecamer sequence critical for directing accurate termination. Binds DNA along the major grove and promotes DNA bending and partial unwinding. Promotes base flipping. Transcription termination activity appears to be polarized with highest specificity for transcripts initiated on the light strand. The sequence is that of Transcription termination factor 1a, mitochondrial (Mterf1a) from Mus musculus (Mouse).